A 188-amino-acid polypeptide reads, in one-letter code: Gamma-glutamylcyclotransferase (188 aa).

19-24 contributes to the substrate binding site; it reads YFAYGS. The active-site Proton acceptor is glutamate 98. Substrate is bound at residue tyrosine 139. The residue at position 173 (serine 173) is a Phosphoserine.

The protein belongs to the gamma-glutamylcyclotransferase family. As to quaternary structure, homodimer.

The catalysed reaction is an alpha-(gamma-L-glutamyl)-L-amino acid = 5-oxo-L-proline + an L-alpha-amino acid. In terms of biological role, catalyzes the formation of 5-oxoproline from gamma-glutamyl dipeptides and may play a significant role in glutathione homeostasis. Induces release of cytochrome c from mitochondria with resultant induction of apoptosis. In Homo sapiens (Human), this protein is Gamma-glutamylcyclotransferase.